Consider the following 189-residue polypeptide: UPF0301 protein PLES_04031 (189 aa).

It belongs to the UPF0301 (AlgH) family.

The polypeptide is UPF0301 protein PLES_04031 (Pseudomonas aeruginosa (strain LESB58)).